The chain runs to 236 residues: 2,3,4,5-tetrahydropyridine-2,6-dicarboxylate N-acetyltransferase (236 aa).

The protein belongs to the transferase hexapeptide repeat family. DapH subfamily.

The enzyme catalyses (S)-2,3,4,5-tetrahydrodipicolinate + acetyl-CoA + H2O = L-2-acetamido-6-oxoheptanedioate + CoA. Its pathway is amino-acid biosynthesis; L-lysine biosynthesis via DAP pathway; LL-2,6-diaminopimelate from (S)-tetrahydrodipicolinate (acetylase route): step 1/3. Functionally, catalyzes the transfer of an acetyl group from acetyl-CoA to tetrahydrodipicolinate. This Bacillus pumilus (strain SAFR-032) protein is 2,3,4,5-tetrahydropyridine-2,6-dicarboxylate N-acetyltransferase.